The chain runs to 680 residues: Leucine-rich repeat and calponin homology domain-containing protein 4 (680 aa).

Over residues 1–22 (MAAAVAGPLAAGGEEAAASVSL) the composition is skewed to low complexity. A disordered region spans residues 1–35 (MAAAVAGPLAAGGEEAAASVSLPGSPGLPGSRSAE). LRR repeat units follow at residues 41 to 64 (AVAT…AARS), 67 to 90 (LSDI…ACQL), 92 to 113 (SLEG…LGNL), 114 to 136 (TALT…ICQL), 138 to 158 (LRVL…ISTL), 159 to 181 (GSLR…LCSL), 182 to 204 (RSLR…LGDL), 206 to 226 (LVRL…FCRL), and 227 to 250 (RHLQ…CLKG). 6 positions are modified to phosphoserine: serine 279, serine 281, serine 304, serine 307, serine 309, and serine 313. Positions 329–528 (SELARDPRGP…PSSPESVLRP (200 aa)) are disordered. The span at 330–345 (ELARDPRGPRQPREDG) shows a compositional bias: basic and acidic residues. A compositionally biased stretch (acidic residues) spans 346–355 (AGDGDLEQID). Composition is skewed to basic and acidic residues over residues 357–371 (IDSH…RSAA) and 385–418 (DVEK…ERKQ). Serine 432 carries the phosphoserine modification. Low complexity-rich tracts occupy residues 440–453 (AAGA…TQAT) and 510–528 (RSSS…VLRP). Phosphoserine occurs at positions 511, 513, 517, 521, and 586. The Calponin-homology (CH) domain occupies 531 to 644 (FPQEKELISQ…VLEAVILVGG (114 aa)). A helical membrane pass occupies residues 655–675 (GLGGFLLFYVVFMLLLYVVYT).

In terms of tissue distribution, widely expressed across tissues, with the most abundant expression in spleen, testes, thymus, intestine, and blood. Expressed in macrophages.

It localises to the cell membrane. In terms of biological role, accessory protein that regulates signaling by multiple TLRs, acting as a broad-spanning regulator of the innate immune response. In macrophages, binds LPS and promotes proper docking of LPS in lipid raft membrane. May be required for lipid raft maintenance. The chain is Leucine-rich repeat and calponin homology domain-containing protein 4 (Lrch4) from Mus musculus (Mouse).